A 1053-amino-acid polypeptide reads, in one-letter code: Prestalk protein (1053 aa).

An N-terminal signal peptide occupies residues 1-18; it reads MNKIYLILILFTFVGIIL. Residues 38-60 form an X-1 repeat; sequence NKCTLDKCNNGCCSNTPININDN. The 41 X 24 AA tandem repeats, Cys-rich stretch occupies residues 38 to 1019; the sequence is NKCTLDKCNN…VHTPVDCNDN (982 aa). One copy of the X-2 repeat lies at 61–84; sequence DECTVDTCNPKTGISHTPVNCDDG. The X-3 repeat unit spans residues 85–108; that stretch reads NSCTADSCLCGKGCQHVPIACDDN. An A-1 repeat occupies 109-132; the sequence is NACTVDSCSNSTGCCHTPLSCDDN. Residues 133-156 form an A-2 repeat; the sequence is NPCTVDSCSNSTGCCHTPINVDDH. Residues 157 to 180 form a B-1 repeat; the sequence is NACTEDKCTQSGGVTHTPIACDDK. An A-3 repeat occupies 181-204; sequence NACTVDSCSNSTGCCHTPLSCDDN. The stretch at 205–228 is one A-4 repeat; the sequence is NACTVDSCSNSTGCVHTPINVDDH. The stretch at 229-252 is one B-2 repeat; the sequence is NACTEDKCTQSGGVTHTPIACDDK. The stretch at 253–276 is one A-5 repeat; the sequence is NACTADSCSNSTGCCHTPITCDDN. Residues 277-300 form an A-6 repeat; it reads NACTVDSCSNSTGCCHTPINVDDN. One copy of the B-3 repeat lies at 301–324; it reads NACTEDKCTQSGGVTHTPIACDDK. The stretch at 325 to 348 is one A-7 repeat; sequence NACTVDSCSNSTGCVHTPLACDDK. The A-8 repeat unit spans residues 349-372; it reads NPCTVDSCSNSTGCCHTPINVDDN. One copy of the B-4 repeat lies at 373–396; the sequence is NACTEDKCTQSGGVTHTPINCDDN. Residues 397 to 420 form an A-9 repeat; sequence NKCTVDSCSNSTGCCHTPMSCDDN. The A-10 repeat unit spans residues 421–444; that stretch reads NPCTVDSCSNSTGCVHTPINVDDN. Residues 445–468 form a B-5 repeat; the sequence is NACTEDKCTQNGGVTHTPIACDDK. The A-11 repeat unit spans residues 469 to 492; that stretch reads NACTVDSCSNSTGCCHTPLKCDDN. The stretch at 493–516 is one A-12 repeat; sequence NACTVDSCSNSTGCVHTPINVDDN. Residues 517 to 540 form a B-6 repeat; the sequence is NACTEDKCTQSGGVTHTPISCDDK. One copy of the A-13 repeat lies at 541-564; the sequence is NPCTIDSCSNSTGCVHTPMSCDDR. The stretch at 565 to 588 is one X-4 repeat; it reads NPCTSDFCSWEKGCQHVALSCNDF. An A-14 repeat occupies 589–612; it reads NACTMDSCSNSTGCTHTPIACDDK. An A-15 repeat occupies 613 to 636; that stretch reads NACTVDSCSNSTGCVHTPLTCDDN. One copy of the A-16 repeat lies at 637-660; that stretch reads NPCTVDSCSNSTGCCHTPINVDDH. A B-7 repeat occupies 661–684; the sequence is NACTEDKCTQSGGVTHTPIACDDK. The stretch at 685–708 is one A-17 repeat; the sequence is NACTVDSCSNSTGCCHTPLSCDDN. An A-18 repeat occupies 709–732; the sequence is NACTVDSCSNSTGCVHTPINVDDN. The B-8 repeat unit spans residues 733 to 756; the sequence is NACTEDKCTQNGGVTHTPIACDDK. The stretch at 757–780 is one A-19 repeat; sequence NACTVDSCSNSTGCCHTPLKCDDN. Residues 781 to 804 form an A-20 repeat; that stretch reads NPCTVDSCSNSTGCVHTPMNVDDN. Residues 805–828 form a B-9 repeat; that stretch reads NACTEDKCTQNGGVTHTPIRCDDL. The stretch at 829–852 is one A-21 repeat; it reads NSCTADSCSNSTGCVHTPINCDDN. An A-22 repeat occupies 853–876; it reads NKCTADSCSNSTGCCHTPISCDDN. The stretch at 877–900 is one A-23 repeat; sequence NPCTVDSCSNSTGCCHTPINVDDN. The B-10 repeat unit spans residues 901–924; it reads NPCTEDKCTQSGGVTHTPIGCNDN. The A-24 repeat unit spans residues 925–948; sequence NACTVDSCSNSTGCTHTPMKCDDN. One copy of the A-25 repeat lies at 949–971; that stretch reads NPCTIDSCSNSTGCVHTPMNCDD. The A-26 repeat unit spans residues 972–995; the sequence is GNFCTLDSCCSTGCTHTPIIIDDN. Residues 996–1019 form an A-27 repeat; it reads NPCTVDSCCNSTGVVHTPVDCNDN.

The protein localises to the secreted. The protein resides in the extracellular space. Its subcellular location is the extracellular matrix. Functionally, component of the stalk tube, the matrix that encases stalk cells. This is Prestalk protein (ecmB) from Dictyostelium discoideum (Social amoeba).